The following is a 249-amino-acid chain: uncharacterized protein (249 aa).

Residue 11 to 34 participates in NADP(+) binding; it reads IFGGRSQIGGELARRLAAGATMVL. Substrate is bound at residue Ser142. Catalysis depends on Tyr155, which acts as the Proton acceptor.

This sequence belongs to the short-chain dehydrogenases/reductases (SDR) family.

This is an uncharacterized protein from Mycobacterium tuberculosis (strain ATCC 25618 / H37Rv).